Reading from the N-terminus, the 282-residue chain is Acetyl-coenzyme A carboxylase carboxyl transferase subunit beta (282 aa).

Residues leucine 25–proline 282 form the CoA carboxyltransferase N-terminal domain. Zn(2+) contacts are provided by cysteine 29, cysteine 32, cysteine 48, and cysteine 51. The C4-type zinc-finger motif lies at cysteine 29 to cysteine 51.

It belongs to the AccD/PCCB family. As to quaternary structure, acetyl-CoA carboxylase is a heterohexamer composed of biotin carboxyl carrier protein (AccB), biotin carboxylase (AccC) and two subunits each of ACCase subunit alpha (AccA) and ACCase subunit beta (AccD). Zn(2+) serves as cofactor.

The protein resides in the cytoplasm. The catalysed reaction is N(6)-carboxybiotinyl-L-lysyl-[protein] + acetyl-CoA = N(6)-biotinyl-L-lysyl-[protein] + malonyl-CoA. It participates in lipid metabolism; malonyl-CoA biosynthesis; malonyl-CoA from acetyl-CoA: step 1/1. Its function is as follows. Component of the acetyl coenzyme A carboxylase (ACC) complex. Biotin carboxylase (BC) catalyzes the carboxylation of biotin on its carrier protein (BCCP) and then the CO(2) group is transferred by the transcarboxylase to acetyl-CoA to form malonyl-CoA. In Citrifermentans bemidjiense (strain ATCC BAA-1014 / DSM 16622 / JCM 12645 / Bem) (Geobacter bemidjiensis), this protein is Acetyl-coenzyme A carboxylase carboxyl transferase subunit beta.